We begin with the raw amino-acid sequence, 466 residues long: UDP-N-acetylmuramoylalanine--D-glutamate ligase (466 aa).

124 to 130 contributes to the ATP binding site; it reads GSDGKTT.

This sequence belongs to the MurCDEF family.

The protein localises to the cytoplasm. The catalysed reaction is UDP-N-acetyl-alpha-D-muramoyl-L-alanine + D-glutamate + ATP = UDP-N-acetyl-alpha-D-muramoyl-L-alanyl-D-glutamate + ADP + phosphate + H(+). It participates in cell wall biogenesis; peptidoglycan biosynthesis. Cell wall formation. Catalyzes the addition of glutamate to the nucleotide precursor UDP-N-acetylmuramoyl-L-alanine (UMA). The protein is UDP-N-acetylmuramoylalanine--D-glutamate ligase of Acetivibrio thermocellus (strain ATCC 27405 / DSM 1237 / JCM 9322 / NBRC 103400 / NCIMB 10682 / NRRL B-4536 / VPI 7372) (Clostridium thermocellum).